The sequence spans 423 residues: Tyrosine--tRNA ligase (423 aa).

Tyr35 provides a ligand contact to L-tyrosine. The 'HIGH' region signature appears at 40-49 (PTAPSLHAGH). L-tyrosine contacts are provided by Tyr170 and Gln174. The 'KMSKS' region signature appears at 230 to 234 (KFGKS). Lys233 provides a ligand contact to ATP. The S4 RNA-binding domain maps to 355–412 (DLITDLLVATGLSASKGAARRTIAEGGVSVNNVKIDSDEWTPQASDFLHGRWLVLRRG).

This sequence belongs to the class-I aminoacyl-tRNA synthetase family. TyrS type 1 subfamily. In terms of assembly, homodimer.

It localises to the cytoplasm. It carries out the reaction tRNA(Tyr) + L-tyrosine + ATP = L-tyrosyl-tRNA(Tyr) + AMP + diphosphate + H(+). Catalyzes the attachment of tyrosine to tRNA(Tyr) in a two-step reaction: tyrosine is first activated by ATP to form Tyr-AMP and then transferred to the acceptor end of tRNA(Tyr). This chain is Tyrosine--tRNA ligase, found in Mycobacterium sp. (strain JLS).